Reading from the N-terminus, the 62-residue chain is Small ribosomal subunit protein bS21 (62 aa).

The tract at residues 43 to 62 is disordered; it reads EKRKRKAMALQKQRKRRSRY. Over residues 44-62 the composition is skewed to basic residues; sequence KRKRKAMALQKQRKRRSRY.

This sequence belongs to the bacterial ribosomal protein bS21 family.

This is Small ribosomal subunit protein bS21 from Trichodesmium erythraeum (strain IMS101).